The chain runs to 388 residues: Succinate--CoA ligase [ADP-forming] subunit beta (388 aa).

The region spanning 9–245 is the ATP-grasp domain; sequence KELLAKYGLP…KSQENERELK (237 aa). Residues lysine 46, 53 to 55, glutamate 100, tyrosine 103, and glutamate 108 contribute to the ATP site; that span reads GRG. Residues asparagine 200 and aspartate 214 each coordinate Mg(2+). Residues asparagine 265 and 322–324 each bind substrate; that span reads GIV.

Belongs to the succinate/malate CoA ligase beta subunit family. As to quaternary structure, heterotetramer of two alpha and two beta subunits. Mg(2+) serves as cofactor.

The catalysed reaction is succinate + ATP + CoA = succinyl-CoA + ADP + phosphate. It catalyses the reaction GTP + succinate + CoA = succinyl-CoA + GDP + phosphate. It functions in the pathway carbohydrate metabolism; tricarboxylic acid cycle; succinate from succinyl-CoA (ligase route): step 1/1. Its function is as follows. Succinyl-CoA synthetase functions in the citric acid cycle (TCA), coupling the hydrolysis of succinyl-CoA to the synthesis of either ATP or GTP and thus represents the only step of substrate-level phosphorylation in the TCA. The beta subunit provides nucleotide specificity of the enzyme and binds the substrate succinate, while the binding sites for coenzyme A and phosphate are found in the alpha subunit. The chain is Succinate--CoA ligase [ADP-forming] subunit beta from Laribacter hongkongensis (strain HLHK9).